Consider the following 271-residue polypeptide: Thermoregulatory protein LcrF (271 aa).

An HTH araC/xylS-type domain is found at 167–265; the sequence is ERLQKFMEEN…GCTPSQARLT (99 aa). DNA-binding regions (H-T-H motif) lie at residues 184 to 205 and 232 to 255; these read SKFA…GTVY and IVDI…RRRF.

Functionally, transcriptional activator of the thermally regulated virulent yopE gene. LcrF activity could be modulated by the interaction with an inducer molecule serving as a temperature messenger. The availability of the messenger would in turn be controlled by a temperature-responsive process serving as a cellular thermometer. The protein is Thermoregulatory protein LcrF (lcrF) of Yersinia pestis.